A 423-amino-acid chain; its full sequence is Ferrochelatase, mitochondrial (423 aa).

The transit peptide at 1–54 (MRSLGANMAAALRAAGVLLRDPLASSSWRVCQPWRWKSGAAAAAVTTETAQHAQ) directs the protein to the mitochondrion. Position 57 is an N6-acetyllysine (Lys57). 3 residues coordinate protoporphyrin IX: Arg115, Tyr123, and Ser130. Lys138 bears the N6-succinyllysine mark. Residue Cys196 participates in [2Fe-2S] cluster binding. Active-site residues include His230 and Asp383. [2Fe-2S] cluster is bound by residues Cys403, Cys406, and Cys411. N6-acetyllysine; alternate is present on Lys415. Lys415 is subject to N6-succinyllysine; alternate.

It belongs to the ferrochelatase family. Homodimer. Homotetramer. Interacts with PGRMC1; the interaction results in decreased FECH activity. Interacts with ABCB10 and SLC25A37; this interaction forms an oligomeric complex. Forms a complex with ABCB7 and ABCB10, where a dimeric FECH bridges ABCB7 and ABCB10 homodimers; this complex may be required for cellular iron homeostasis, mitochondrial function and heme biosynthesis. Interacts with ABCB7 and ABCB10. [2Fe-2S] cluster is required as a cofactor.

Its subcellular location is the mitochondrion inner membrane. It carries out the reaction heme b + 2 H(+) = protoporphyrin IX + Fe(2+). It participates in porphyrin-containing compound metabolism; protoheme biosynthesis; protoheme from protoporphyrin-IX: step 1/1. Inhibited by nitric oxide (NO). The 2Fe-2S cluster could act as a NO sensor. Catalyzes the ferrous insertion into protoporphyrin IX and participates in the terminal step in the heme biosynthetic pathway. In Homo sapiens (Human), this protein is Ferrochelatase, mitochondrial.